Here is an 89-residue protein sequence, read N- to C-terminus: Small ribosomal subunit protein uS15 (89 aa).

It belongs to the universal ribosomal protein uS15 family. Part of the 30S ribosomal subunit. Forms a bridge to the 50S subunit in the 70S ribosome, contacting the 23S rRNA.

One of the primary rRNA binding proteins, it binds directly to 16S rRNA where it helps nucleate assembly of the platform of the 30S subunit by binding and bridging several RNA helices of the 16S rRNA. In terms of biological role, forms an intersubunit bridge (bridge B4) with the 23S rRNA of the 50S subunit in the ribosome. The protein is Small ribosomal subunit protein uS15 of Azobacteroides pseudotrichonymphae genomovar. CFP2.